The following is a 475-amino-acid chain: Aspartyl/glutamyl-tRNA(Asn/Gln) amidotransferase subunit B (475 aa).

Belongs to the GatB/GatE family. GatB subfamily. As to quaternary structure, heterotrimer of A, B and C subunits.

The catalysed reaction is L-glutamyl-tRNA(Gln) + L-glutamine + ATP + H2O = L-glutaminyl-tRNA(Gln) + L-glutamate + ADP + phosphate + H(+). It carries out the reaction L-aspartyl-tRNA(Asn) + L-glutamine + ATP + H2O = L-asparaginyl-tRNA(Asn) + L-glutamate + ADP + phosphate + 2 H(+). Allows the formation of correctly charged Asn-tRNA(Asn) or Gln-tRNA(Gln) through the transamidation of misacylated Asp-tRNA(Asn) or Glu-tRNA(Gln) in organisms which lack either or both of asparaginyl-tRNA or glutaminyl-tRNA synthetases. The reaction takes place in the presence of glutamine and ATP through an activated phospho-Asp-tRNA(Asn) or phospho-Glu-tRNA(Gln). The sequence is that of Aspartyl/glutamyl-tRNA(Asn/Gln) amidotransferase subunit B from Agathobacter rectalis (strain ATCC 33656 / DSM 3377 / JCM 17463 / KCTC 5835 / VPI 0990) (Eubacterium rectale).